A 549-amino-acid chain; its full sequence is Carboxylesterase 1C (549 aa).

The N-terminal stretch at 1 to 18 is a signal peptide; it reads MWLCALVWASLAVCPIWG. An N-linked (GlcNAc...) asparagine glycan is attached at N79. C87 and C116 form a disulfide bridge. The Acyl-ester intermediate role is filled by S221. C273 and C284 are disulfide-bonded. N-linked (GlcNAc...) asparagine glycosylation is found at N274, N275, and N302. The active-site Charge relay system is the E340. N375 is a glycosylation site (N-linked (GlcNAc...) asparagine). H453 functions as the Charge relay system in the catalytic mechanism. S471 bears the Phosphoserine mark. A glycan (N-linked (GlcNAc...) asparagine) is linked at N476. The short motif at 546-549 is the Prevents secretion from ER element; sequence TEHT.

Belongs to the type-B carboxylesterase/lipase family.

It localises to the endoplasmic reticulum lumen. The enzyme catalyses a carboxylic ester + H2O = an alcohol + a carboxylate + H(+). Functionally, involved in the detoxification of xenobiotics and in the activation of ester and amide prodrugs. Involved in the extracellular metabolism of lung surfactant. The polypeptide is Carboxylesterase 1C (Ces1c) (Rattus norvegicus (Rat)).